A 527-amino-acid polypeptide reads, in one-letter code: Cytochrome P450 monooxygenase aba2 (527 aa).

The chain crosses the membrane as a helical span at residues 26 to 46; it reads TTVAVLVTVALIAQVLWKIFF. Asn-189, Asn-420, and Asn-448 each carry an N-linked (GlcNAc...) asparagine glycan. Residue Cys-460 coordinates heme. Asn-464 carries N-linked (GlcNAc...) asparagine glycosylation.

Belongs to the cytochrome P450 family. Heme serves as cofactor.

It localises to the membrane. Its pathway is hormone biosynthesis. Functionally, cytochrome P450 monooxygenase; part of the gene cluster that mediates the biosynthesis of abscisic acid (ABA), a phytohormone that acts antagonistically toward salicylic acid (SA), jasmonic acid (JA) and ethylene (ETH) signaling, to impede plant defense responses. The first step of the pathway catalyzes the reaction from farnesyl diphosphate to alpha-ionylideneethane performed by the alpha-ionylideneethane synthase aba3 via a three-step reaction mechanism involving 2 neutral intermediates, beta-farnesene and allofarnesene. The cytochrome P450 monooxygenase aba1 might then be involved in the conversion of alpha-ionylideneethane to alpha-ionylideneacetic acid. Alpha-ionylideneacetic acid is further converted to abscisic acid in 2 steps involving the cytochrome P450 monooxygenase aba2 and the short-chain dehydrogenase/reductase aba4, via the intermediates 1'-deoxy-ABA or 1',4'-trans-diol-ABA, depending on the order of action of these 2 enzymes. Aba2 is responsible for the hydroxylation of carbon atom C-1' and aba4 might be involved in the oxidation of the C-4' carbon atom. The polypeptide is Cytochrome P450 monooxygenase aba2 (aba2) (Botryotinia fuckeliana (strain B05.10) (Noble rot fungus)).